The primary structure comprises 936 residues: Isoleucine--tRNA ligase (936 aa).

The short motif at 58 to 68 (PYANGRAHLGT) is the 'HIGH' region element. Position 561 (Glu-561) interacts with L-isoleucyl-5'-AMP. A 'KMSKS' region motif is present at residues 602–606 (KMSKS). Residue Lys-605 participates in ATP binding. Cys-899, Cys-902, Cys-919, and Cys-922 together coordinate Zn(2+).

This sequence belongs to the class-I aminoacyl-tRNA synthetase family. IleS type 1 subfamily. In terms of assembly, monomer. Zn(2+) is required as a cofactor.

It is found in the cytoplasm. It carries out the reaction tRNA(Ile) + L-isoleucine + ATP = L-isoleucyl-tRNA(Ile) + AMP + diphosphate. Its function is as follows. Catalyzes the attachment of isoleucine to tRNA(Ile). As IleRS can inadvertently accommodate and process structurally similar amino acids such as valine, to avoid such errors it has two additional distinct tRNA(Ile)-dependent editing activities. One activity is designated as 'pretransfer' editing and involves the hydrolysis of activated Val-AMP. The other activity is designated 'posttransfer' editing and involves deacylation of mischarged Val-tRNA(Ile). This is Isoleucine--tRNA ligase from Coxiella burnetii (strain RSA 331 / Henzerling II).